The chain runs to 220 residues: Charged multivesicular body protein 2a (220 aa).

Met-1 is subject to N-acetylmethionine. 2 coiled-coil regions span residues 12–52 (EELL…KMAK) and 195–220 (RAAEAAAALADADADLEERLKNLRRD). An MIT-interacting motif motif is present at residues 208–218 (ADLEERLKNLR).

The protein belongs to the SNF7 family. As to quaternary structure, probable core component of the endosomal sorting required for transport complex III (ESCRT-III). ESCRT-III components are thought to multimerize to form a flat lattice on the perimeter membrane of the endosome.

It is found in the late endosome membrane. The protein localises to the cytoplasm. In terms of biological role, probable core component of the endosomal sorting required for transport complex III (ESCRT-III) which is involved in multivesicular bodies (MVBs) formation and sorting of endosomal cargo proteins into MVBs. MVBs contain intraluminal vesicles (ILVs) that are generated by invagination and scission from the limiting membrane of the endosome and mostly are delivered to lysosomes enabling degradation of membrane proteins, such as stimulated growth factor receptors, lysosomal enzymes and lipids. The sequence is that of Charged multivesicular body protein 2a (CHMP2A) from Gallus gallus (Chicken).